A 315-amino-acid chain; its full sequence is Borealin (315 aa).

2 disordered regions span residues 103–126 and 138–226; these read IEGH…GASG and LRST…TPPM. Residue T146 is modified to Phosphothreonine. S152 bears the Phosphoserine mark. Positions 153-162 are enriched in basic residues; it reads ARARRARRSR. S163 carries the phosphoserine modification. Residues 178-188 are compositionally biased toward low complexity; that stretch reads SISSSSSSSRN. Residue S205 is modified to Phosphoserine. Phosphothreonine is present on T209. S218, S220, and S244 each carry phosphoserine.

Belongs to the borealin family. In terms of assembly, component of the CPC complex. Ubiquitously expressed in the early embryo. Expression is restricted to the ventral nerve cord and brain during later embryonic stages.

The protein resides in the nucleus. It is found in the chromosome. It localises to the centromere. Its subcellular location is the cytoplasm. The protein localises to the cytoskeleton. The protein resides in the spindle. In terms of biological role, component of the chromosomal passenger complex (CPC), a complex that acts as a key regulator of embryonic mitosis. The CPC complex has essential functions at the centromere for ensuring sister chromatid cohesion, recruitment of the CPC to kinetochores, and chromosome alignment and segregation. There is no function in meiotic histone phosphorylation or spindle formation. This is Borealin (borr) from Drosophila melanogaster (Fruit fly).